We begin with the raw amino-acid sequence, 354 residues long: Glycerol-3-phosphate dehydrogenase [NAD(P)+] (354 aa).

Residues serine 27, phenylalanine 28, arginine 48, and lysine 121 each coordinate NADPH. Lysine 121 and glycine 149 together coordinate sn-glycerol 3-phosphate. NADPH is bound at residue alanine 153. Sn-glycerol 3-phosphate is bound by residues lysine 204, aspartate 257, serine 267, arginine 268, and asparagine 269. The Proton acceptor role is filled by lysine 204. Arginine 268 is a binding site for NADPH. NADPH is bound by residues valine 292 and glutamate 294.

The protein belongs to the NAD-dependent glycerol-3-phosphate dehydrogenase family.

It is found in the cytoplasm. It catalyses the reaction sn-glycerol 3-phosphate + NAD(+) = dihydroxyacetone phosphate + NADH + H(+). It carries out the reaction sn-glycerol 3-phosphate + NADP(+) = dihydroxyacetone phosphate + NADPH + H(+). The protein operates within membrane lipid metabolism; glycerophospholipid metabolism. Functionally, catalyzes the reduction of the glycolytic intermediate dihydroxyacetone phosphate (DHAP) to sn-glycerol 3-phosphate (G3P), the key precursor for phospholipid synthesis. This is Glycerol-3-phosphate dehydrogenase [NAD(P)+] from Pseudomonas fluorescens (strain Pf0-1).